The primary structure comprises 253 residues: MAGHSKFKNIQHRKGAQDTKRAKVFTKLIREIVIAAKTGSSNNPENNPRLRNALTAARIQNLPKERIDKALNSANDSSNNENYTEIRYEGYAQNGIAIIVEALTDNKNRTAAEVRSSFTKYGGSLGETGSVNYLFNHCGVIQYPINIASNEDVLEAVIEAGGHDIISDDTTHTIYTDIENFSKVLEFLTGKYGIPEDSYIGWIPLNTIIIDDKEKAEKLLKLVEVLEKSDDVQKVFGNYELSDDVYEIIQGEP.

This sequence belongs to the TACO1 family.

The protein resides in the cytoplasm. This chain is Probable transcriptional regulatory protein RPR_05505, found in Rickettsia peacockii (strain Rustic).